A 218-amino-acid chain; its full sequence is Small ribosomal subunit protein uS3 (218 aa).

One can recognise a KH type-2 domain in the interval 38-107 (VREYIEKRLK…RVHVNVVEVK (70 aa)).

The protein belongs to the universal ribosomal protein uS3 family. In terms of assembly, part of the 30S ribosomal subunit. Forms a tight complex with proteins S10 and S14.

In terms of biological role, binds the lower part of the 30S subunit head. Binds mRNA in the 70S ribosome, positioning it for translation. The polypeptide is Small ribosomal subunit protein uS3 (Exiguobacterium sibiricum (strain DSM 17290 / CCUG 55495 / CIP 109462 / JCM 13490 / 255-15)).